Reading from the N-terminus, the 634-residue chain is Threonine--tRNA ligase (634 aa).

An editing domain region spans residues 1–142; that stretch reads MQLLLIHSDY…LSRSIRPEGA (142 aa). The tract at residues 214–513 is catalytic; sequence PHVELMRRLE…TEEGKVPMLP (300 aa). The Zn(2+) site is built by Cys306, His358, and His482.

It belongs to the class-II aminoacyl-tRNA synthetase family. In terms of assembly, homodimer. It depends on Zn(2+) as a cofactor.

The protein localises to the cytoplasm. It carries out the reaction tRNA(Thr) + L-threonine + ATP = L-threonyl-tRNA(Thr) + AMP + diphosphate + H(+). Functionally, catalyzes the attachment of threonine to tRNA(Thr) in a two-step reaction: L-threonine is first activated by ATP to form Thr-AMP and then transferred to the acceptor end of tRNA(Thr). Edits incorrectly charged L-seryl-tRNA(Thr) probably via its editing domain (tested with total bovine tRNA). Activates L-serine, but does not detectably transfer it to tRNA (tested with total bovine tRNA). The polypeptide is Threonine--tRNA ligase (Methanosarcina mazei (strain ATCC BAA-159 / DSM 3647 / Goe1 / Go1 / JCM 11833 / OCM 88) (Methanosarcina frisia)).